The chain runs to 31 residues: Cyclotide vico-B (31 aa).

The segment at residues G1–N31 is a cross-link (cyclopeptide (Gly-Asn)). Intrachain disulfides connect C5-C21, C9-C23, and C14-C28.

It belongs to the cyclotide family. Bracelet subfamily. This is a cyclic peptide.

Its function is as follows. Probably participates in a plant defense mechanism. The sequence is that of Cyclotide vico-B from Viola cotyledon (Violeta).